We begin with the raw amino-acid sequence, 610 residues long: Elongation factor 4 (610 aa).

The 183-residue stretch at 11–193 folds into the tr-type G domain; it reads KYIRNFSIVA…QIVTKIPAPA (183 aa). GTP contacts are provided by residues 23-28 and 140-143; these read DHGKST and NKID.

Belongs to the TRAFAC class translation factor GTPase superfamily. Classic translation factor GTPase family. LepA subfamily.

Its subcellular location is the cell membrane. The enzyme catalyses GTP + H2O = GDP + phosphate + H(+). Its function is as follows. Required for accurate and efficient protein synthesis under certain stress conditions. May act as a fidelity factor of the translation reaction, by catalyzing a one-codon backward translocation of tRNAs on improperly translocated ribosomes. Back-translocation proceeds from a post-translocation (POST) complex to a pre-translocation (PRE) complex, thus giving elongation factor G a second chance to translocate the tRNAs correctly. Binds to ribosomes in a GTP-dependent manner. This is Elongation factor 4 from Levilactobacillus brevis (strain ATCC 367 / BCRC 12310 / CIP 105137 / JCM 1170 / LMG 11437 / NCIMB 947 / NCTC 947) (Lactobacillus brevis).